The chain runs to 230 residues: Ureidoacrylate amidohydrolase RutB (230 aa).

Asp24 functions as the Proton acceptor in the catalytic mechanism. Lys133 is a catalytic residue. The Nucleophile role is filled by Cys166.

Belongs to the isochorismatase family. RutB subfamily.

It catalyses the reaction (Z)-3-ureidoacrylate + H2O + H(+) = (Z)-3-aminoacrylate + NH4(+) + CO2. The catalysed reaction is (Z)-3-ureidoacrylate + H2O = (Z)-3-aminoacrylate + carbamate + H(+). It carries out the reaction (Z)-2-methylureidoacrylate + H2O + H(+) = (Z)-2-methylaminoacrylate + NH4(+) + CO2. Functionally, hydrolyzes ureidoacrylate to form aminoacrylate and carbamate. The carbamate hydrolyzes spontaneously, thereby releasing one of the nitrogen atoms of the pyrimidine ring as ammonia and one of its carbon atoms as CO2. This chain is Ureidoacrylate amidohydrolase RutB, found in Enterobacter sp. (strain 638).